The following is a 256-amino-acid chain: Pyridoxine 5'-phosphate synthase (256 aa).

Asn10 provides a ligand contact to 3-amino-2-oxopropyl phosphate. 12–13 contacts 1-deoxy-D-xylulose 5-phosphate; the sequence is DH. Arg21 is a 3-amino-2-oxopropyl phosphate binding site. His46 functions as the Proton acceptor in the catalytic mechanism. 1-deoxy-D-xylulose 5-phosphate-binding residues include Arg48 and His53. Glu73 functions as the Proton acceptor in the catalytic mechanism. Thr103 is a 1-deoxy-D-xylulose 5-phosphate binding site. His193 functions as the Proton donor in the catalytic mechanism. 3-amino-2-oxopropyl phosphate contacts are provided by residues Gly194 and 215-216; that span reads GH.

This sequence belongs to the PNP synthase family. As to quaternary structure, homooctamer; tetramer of dimers.

The protein localises to the cytoplasm. It catalyses the reaction 3-amino-2-oxopropyl phosphate + 1-deoxy-D-xylulose 5-phosphate = pyridoxine 5'-phosphate + phosphate + 2 H2O + H(+). The protein operates within cofactor biosynthesis; pyridoxine 5'-phosphate biosynthesis; pyridoxine 5'-phosphate from D-erythrose 4-phosphate: step 5/5. Catalyzes the complicated ring closure reaction between the two acyclic compounds 1-deoxy-D-xylulose-5-phosphate (DXP) and 3-amino-2-oxopropyl phosphate (1-amino-acetone-3-phosphate or AAP) to form pyridoxine 5'-phosphate (PNP) and inorganic phosphate. This chain is Pyridoxine 5'-phosphate synthase, found in Zymomonas mobilis subsp. mobilis (strain ATCC 31821 / ZM4 / CP4).